The sequence spans 258 residues: Heat-labile enterotoxin A chain (258 aa).

Residues M1 to A18 form the signal peptide. R25–G39 lines the NAD(+) pocket. Residue E128 is part of the active site. The cysteines at positions 205 and 217 are disulfide-linked.

This sequence belongs to the enterotoxin A family. As to quaternary structure, heterohexamer of one A chain and of five B chains.

The biological activity of the toxin is produced by the A chain, which activates intracellular adenyl cyclase. This chain is Heat-labile enterotoxin A chain (eltA), found in Escherichia coli O78:H11 (strain H10407 / ETEC).